Reading from the N-terminus, the 768-residue chain is Integrin beta-8 (768 aa).

A signal peptide spans 1-42 (MCGSALGLPPAAFVRLRSCRPGPAAFLRAAWVLSLVLGLGRS). At 43 to 683 (ENSRCASSHA…ECFSSPSYLR (641 aa)) the chain is on the extracellular side. Residues 46–95 (RCASSHAVSCSECLALGPDCGWCVHEDFISGGPRSERCDIVSNLISKGCP) enclose the PSI domain. Cystine bridges form between C47-C65, C55-C469, C58-C83, C68-C94, C211-C218, C266-C307, C407-C419, C439-C467, C471-C491, C471-C494, C481-C494, C499-C528, C511-C526, C520-C531, C533-C546, C553-C567, C561-C572, C574-C583, C585-C609, C593-C607, C601-C612, C614-C624, C627-C630, C634-C661, and C640-C657. Residues 146–384 (PVDLYYLVDV…NLVVEAYQKL (239 aa)) enclose the VWFA domain. Residues D154 and S156 each coordinate Mg(2+). Ca(2+) is bound at residue D193. The N-linked (GlcNAc...) asparagine glycan is linked to N233. N249, D251, P253, and E254 together coordinate Ca(2+). Residue E254 coordinates Mg(2+). N-linked (GlcNAc...) asparagine glycosylation is present at N402. 3 N-linked (GlcNAc...) asparagine glycosylation sites follow: N421, N431, and N456. I-EGF domains lie at 471-495 (CEASRGGAAKCAEEAPLDSTCPQCQ), 499-547 (CHQE…KYCE), 548-584 (KDDFSCPYHHGSLCAGHGECEAGRCQCFSGWEGDRCQ), and 585-625 (CPSA…RFCE). N-linked (GlcNAc...) asparagine glycosylation is present at N648. A helical transmembrane segment spans residues 684–703 (IFFIIFIVTFLIGLLKILII). Residues 704 to 768 (RQVILQWNSS…NAHETFRCNF (65 aa)) are Cytoplasmic-facing.

This sequence belongs to the integrin beta chain family. In terms of assembly, heterodimer of an alpha and a beta subunit. Beta-8 (ITGB8) associates with alpha-V (ITGAV) to form ITGAV:ITGB8. ITGAV:ITGB8 interacts with TGFB1. As to expression, placenta, kidney, brain, ovary, uterus and in several transformed cells.

The protein resides in the cell membrane. Its function is as follows. Integrin alpha-V:beta-8 (ITGAV:ITGB8) is a receptor for fibronectin. It recognizes the sequence R-G-D in its ligands. Integrin alpha-V:beta-6 (ITGAV:ITGB6) mediates R-G-D-dependent release of transforming growth factor beta-1 (TGF-beta-1) from regulatory Latency-associated peptide (LAP), thereby playing a key role in TGF-beta-1 activation on the surface of activated regulatory T-cells (Tregs). Required during vasculogenesis. In Oryctolagus cuniculus (Rabbit), this protein is Integrin beta-8 (ITGB8).